Reading from the N-terminus, the 276-residue chain is NADPH-dependent 7-cyano-7-deazaguanine reductase (276 aa).

83–85 (IES) is a binding site for substrate. 85-86 (SK) is a binding site for NADPH. Cys-184 functions as the Thioimide intermediate in the catalytic mechanism. Residue Asp-191 is the Proton donor of the active site. A substrate-binding site is contributed by 223–224 (HE). 252-253 (RG) is an NADPH binding site.

This sequence belongs to the GTP cyclohydrolase I family. QueF type 2 subfamily. As to quaternary structure, homodimer.

Its subcellular location is the cytoplasm. It carries out the reaction 7-aminomethyl-7-carbaguanine + 2 NADP(+) = 7-cyano-7-deazaguanine + 2 NADPH + 3 H(+). The protein operates within tRNA modification; tRNA-queuosine biosynthesis. Functionally, catalyzes the NADPH-dependent reduction of 7-cyano-7-deazaguanine (preQ0) to 7-aminomethyl-7-deazaguanine (preQ1). The protein is NADPH-dependent 7-cyano-7-deazaguanine reductase of Pseudomonas fluorescens (strain ATCC BAA-477 / NRRL B-23932 / Pf-5).